The sequence spans 57 residues: Protein CgkB (57 aa).

In Pseudoalteromonas carrageenovora (Alteromonas carrageenovora), this protein is Protein CgkB (cgkB).